The chain runs to 261 residues: Cytochrome c oxidase subunit 3 (261 aa).

At 1-15 (MTHQTHAYHMVNPSP) the chain is on the mitochondrial matrix side. The chain crosses the membrane as a helical span at residues 16–34 (WPLTGAMSALLLTSGLIMW). Residues 35-40 (FHFNSY) are Mitochondrial intermembrane-facing. The helical transmembrane segment at 41–66 (TLLLLGLLTNLISSYQWWRDIVREGT) threads the bilayer. At 67-72 (YQGHHT) the chain is on the mitochondrial matrix side. Residues 73–105 (KIVQKGLRYGMILFIISEVFFFLGFFWAFYHSS) form a helical membrane-spanning segment. Residues 106–128 (LAPTPELGGCWPPTGISPLNPLE) lie on the Mitochondrial intermembrane side of the membrane. The chain crosses the membrane as a helical span at residues 129-152 (VPLLNTSILLASGVSITWAHHSLM). Residues 153–155 (EGN) lie on the Mitochondrial matrix side of the membrane. The helical transmembrane segment at 156–183 (RKQMLQALTITIALGLYFTALQAMEYYE) threads the bilayer. Over 184–190 (ASFTISD) the chain is Mitochondrial intermembrane. The helical transmembrane segment at 191 to 223 (GVYGSTFFVATGFHGLHVIIGTTFLITCLVRQT) threads the bilayer. Topologically, residues 224-232 (LYHFTSNHH) are mitochondrial matrix. The chain crosses the membrane as a helical span at residues 233–256 (FGFEAAAWYWHFVDVVWLFLYVSI). The Mitochondrial intermembrane segment spans residues 257 to 261 (YWWGS).

This sequence belongs to the cytochrome c oxidase subunit 3 family. Component of the cytochrome c oxidase (complex IV, CIV), a multisubunit enzyme composed of 14 subunits. The complex is composed of a catalytic core of 3 subunits MT-CO1, MT-CO2 and MT-CO3, encoded in the mitochondrial DNA, and 11 supernumerary subunits COX4I, COX5A, COX5B, COX6A, COX6B, COX6C, COX7A, COX7B, COX7C, COX8 and NDUFA4, which are encoded in the nuclear genome. The complex exists as a monomer or a dimer and forms supercomplexes (SCs) in the inner mitochondrial membrane with NADH-ubiquinone oxidoreductase (complex I, CI) and ubiquinol-cytochrome c oxidoreductase (cytochrome b-c1 complex, complex III, CIII), resulting in different assemblies (supercomplex SCI(1)III(2)IV(1) and megacomplex MCI(2)III(2)IV(2)).

It localises to the mitochondrion inner membrane. It carries out the reaction 4 Fe(II)-[cytochrome c] + O2 + 8 H(+)(in) = 4 Fe(III)-[cytochrome c] + 2 H2O + 4 H(+)(out). Functionally, component of the cytochrome c oxidase, the last enzyme in the mitochondrial electron transport chain which drives oxidative phosphorylation. The respiratory chain contains 3 multisubunit complexes succinate dehydrogenase (complex II, CII), ubiquinol-cytochrome c oxidoreductase (cytochrome b-c1 complex, complex III, CIII) and cytochrome c oxidase (complex IV, CIV), that cooperate to transfer electrons derived from NADH and succinate to molecular oxygen, creating an electrochemical gradient over the inner membrane that drives transmembrane transport and the ATP synthase. Cytochrome c oxidase is the component of the respiratory chain that catalyzes the reduction of oxygen to water. Electrons originating from reduced cytochrome c in the intermembrane space (IMS) are transferred via the dinuclear copper A center (CU(A)) of subunit 2 and heme A of subunit 1 to the active site in subunit 1, a binuclear center (BNC) formed by heme A3 and copper B (CU(B)). The BNC reduces molecular oxygen to 2 water molecules using 4 electrons from cytochrome c in the IMS and 4 protons from the mitochondrial matrix. This chain is Cytochrome c oxidase subunit 3 (MT-CO3), found in Ornithorhynchus anatinus (Duckbill platypus).